A 269-amino-acid polypeptide reads, in one-letter code: 4-hydroxy-tetrahydrodipicolinate reductase (269 aa).

NAD(+)-binding positions include 11–16 (GASGRM) and Glu37. Arg38 is an NADP(+) binding site. NAD(+) contacts are provided by residues 101–103 (GTT) and 125–128 (AGNM). Catalysis depends on His158, which acts as the Proton donor/acceptor. Residue His159 coordinates (S)-2,3,4,5-tetrahydrodipicolinate. The active-site Proton donor is the Lys162. Residue 168 to 169 (GT) participates in (S)-2,3,4,5-tetrahydrodipicolinate binding.

It belongs to the DapB family.

It is found in the cytoplasm. It catalyses the reaction (S)-2,3,4,5-tetrahydrodipicolinate + NAD(+) + H2O = (2S,4S)-4-hydroxy-2,3,4,5-tetrahydrodipicolinate + NADH + H(+). The enzyme catalyses (S)-2,3,4,5-tetrahydrodipicolinate + NADP(+) + H2O = (2S,4S)-4-hydroxy-2,3,4,5-tetrahydrodipicolinate + NADPH + H(+). Its pathway is amino-acid biosynthesis; L-lysine biosynthesis via DAP pathway; (S)-tetrahydrodipicolinate from L-aspartate: step 4/4. In terms of biological role, catalyzes the conversion of 4-hydroxy-tetrahydrodipicolinate (HTPA) to tetrahydrodipicolinate. In Cereibacter sphaeroides (strain ATCC 17029 / ATH 2.4.9) (Rhodobacter sphaeroides), this protein is 4-hydroxy-tetrahydrodipicolinate reductase.